The sequence spans 258 residues: Phosphate import ATP-binding protein PstB (258 aa).

The ABC transporter domain occupies 12–253 (LEVKNLNFYY…PARKETEDYI (242 aa)). Residue 44–51 (GPSGCGKS) coordinates ATP.

The protein belongs to the ABC transporter superfamily. Phosphate importer (TC 3.A.1.7) family. As to quaternary structure, the complex is composed of two ATP-binding proteins (PstB), two transmembrane proteins (PstC and PstA) and a solute-binding protein (PstS).

It localises to the cell inner membrane. The enzyme catalyses phosphate(out) + ATP + H2O = ADP + 2 phosphate(in) + H(+). Functionally, part of the ABC transporter complex PstSACB involved in phosphate import. Responsible for energy coupling to the transport system. This chain is Phosphate import ATP-binding protein PstB, found in Bordetella parapertussis (strain 12822 / ATCC BAA-587 / NCTC 13253).